The sequence spans 130 residues: Small ribosomal subunit protein uS8 (130 aa).

The protein belongs to the universal ribosomal protein uS8 family. Part of the 30S ribosomal subunit.

One of the primary rRNA binding proteins, it binds directly to 16S rRNA central domain where it helps coordinate assembly of the platform of the 30S subunit. This chain is Small ribosomal subunit protein uS8, found in Pyrobaculum calidifontis (strain DSM 21063 / JCM 11548 / VA1).